The following is a 678-amino-acid chain: DNA gyrase subunit B (678 aa).

The 115-residue stretch at S456 to P570 folds into the Toprim domain. Residues E462, D535, and D537 each coordinate Mg(2+).

The protein belongs to the type II topoisomerase GyrB family. As to quaternary structure, heterotetramer, composed of two GyrA and two GyrB chains. In the heterotetramer, GyrA contains the active site tyrosine that forms a transient covalent intermediate with the DNA, while GyrB binds cofactors catalyzes ATP hydrolysis. It depends on Mg(2+) as a cofactor. Mn(2+) is required as a cofactor. Requires Ca(2+) as cofactor.

The protein localises to the cytoplasm. The enzyme catalyses ATP-dependent breakage, passage and rejoining of double-stranded DNA.. With respect to regulation, DNA supercoiling is inhibited by fluoroquinolones; IC(50) 1 ug/ml for sitafloxacin. A type II topoisomerase that negatively supercoils closed circular double-stranded (ds) DNA in an ATP-dependent manner to modulate DNA topology and maintain chromosomes in an underwound state. Negative supercoiling favors strand separation, and DNA replication, transcription, recombination and repair, all of which involve strand separation. Also able to catalyze the interconversion of other topological isomers of dsDNA rings, including catenanes and knotted rings. Type II topoisomerases break and join 2 DNA strands simultaneously in an ATP-dependent manner. This is DNA gyrase subunit B from Mycobacterium leprae (strain TN).